The following is a 450-amino-acid chain: UDP-N-acetylmuramoylalanine--D-glutamate ligase (450 aa).

119 to 125 (GSNGKTT) contributes to the ATP binding site.

The protein belongs to the MurCDEF family.

The protein resides in the cytoplasm. The catalysed reaction is UDP-N-acetyl-alpha-D-muramoyl-L-alanine + D-glutamate + ATP = UDP-N-acetyl-alpha-D-muramoyl-L-alanyl-D-glutamate + ADP + phosphate + H(+). Its pathway is cell wall biogenesis; peptidoglycan biosynthesis. Functionally, cell wall formation. Catalyzes the addition of glutamate to the nucleotide precursor UDP-N-acetylmuramoyl-L-alanine (UMA). The protein is UDP-N-acetylmuramoylalanine--D-glutamate ligase of Streptococcus pneumoniae serotype 19F (strain G54).